The chain runs to 1397 residues: DNA-directed RNA polymerase subunit beta' (1397 aa).

Zn(2+) contacts are provided by Cys-71, Cys-73, Cys-86, and Cys-89. Asp-462, Asp-464, and Asp-466 together coordinate Mg(2+). Residues Cys-811, Cys-885, Cys-892, and Cys-895 each contribute to the Zn(2+) site. The segment at 1368–1397 is disordered; sequence QNRDDKILEDQGGATPTASTEIKEPAEGAA. Over residues 1388-1397 the composition is skewed to basic and acidic residues; that stretch reads EIKEPAEGAA.

Belongs to the RNA polymerase beta' chain family. The RNAP catalytic core consists of 2 alpha, 1 beta, 1 beta' and 1 omega subunit. When a sigma factor is associated with the core the holoenzyme is formed, which can initiate transcription. Requires Mg(2+) as cofactor. Zn(2+) serves as cofactor.

It carries out the reaction RNA(n) + a ribonucleoside 5'-triphosphate = RNA(n+1) + diphosphate. In terms of biological role, DNA-dependent RNA polymerase catalyzes the transcription of DNA into RNA using the four ribonucleoside triphosphates as substrates. This Parvibaculum lavamentivorans (strain DS-1 / DSM 13023 / NCIMB 13966) protein is DNA-directed RNA polymerase subunit beta'.